A 49-amino-acid chain; its full sequence is Small ribosomal subunit protein eS31 (49 aa).

Residues Cys-21, Cys-24, Cys-39, and Cys-42 each coordinate Zn(2+). A C4-type zinc finger spans residues 21–42; that stretch reads CPRCGPGVFLADHKNRLACGKC.

The protein belongs to the eukaryotic ribosomal protein eS31 family. Part of the 30S ribosomal subunit. Requires Zn(2+) as cofactor.

This Methanosarcina mazei (strain ATCC BAA-159 / DSM 3647 / Goe1 / Go1 / JCM 11833 / OCM 88) (Methanosarcina frisia) protein is Small ribosomal subunit protein eS31.